The sequence spans 713 residues: Methionine--tRNA ligase (713 aa).

The 'HIGH' region signature appears at 17 to 27 (PYANGPIHIGH). Residues C149, C152, C162, and C165 each contribute to the Zn(2+) site. The short motif at 345-349 (KLSTS) is the 'KMSKS' region element. T348 lines the ATP pocket. Positions 530 to 564 (VRTSTPDDDPAGAVGWEDAGAPLLPAGHPIPSGPD) are disordered. Residues 614 to 713 (DFTQLDLRAG…TEAEDGSVVR (100 aa)) form the tRNA-binding domain.

It belongs to the class-I aminoacyl-tRNA synthetase family. MetG type 1 subfamily. Homodimer. It depends on Zn(2+) as a cofactor.

Its subcellular location is the cytoplasm. It catalyses the reaction tRNA(Met) + L-methionine + ATP = L-methionyl-tRNA(Met) + AMP + diphosphate. In terms of biological role, is required not only for elongation of protein synthesis but also for the initiation of all mRNA translation through initiator tRNA(fMet) aminoacylation. The polypeptide is Methionine--tRNA ligase (Salinibacter ruber (strain DSM 13855 / M31)).